The following is a 140-amino-acid chain: Small ribosomal subunit protein bS6 (140 aa).

The interval 96 to 140 (VTGQSEMLKAEENRSERRERRDRPEHEGADSADSDDSDNSDNADE) is disordered. Positions 103–124 (LKAEENRSERRERRDRPEHEGA) are enriched in basic and acidic residues. The span at 125 to 140 (DSADSDDSDNSDNADE) shows a compositional bias: acidic residues.

This sequence belongs to the bacterial ribosomal protein bS6 family.

Its function is as follows. Binds together with bS18 to 16S ribosomal RNA. The sequence is that of Small ribosomal subunit protein bS6 from Pseudomonas fluorescens (strain SBW25).